A 292-amino-acid polypeptide reads, in one-letter code: Chronophin (292 aa).

The Nucleophile role is filled by Asp25. 2 residues coordinate Mg(2+): Asp25 and Asp27. Catalysis depends on Asp27, which acts as the Proton donor. Substrate-binding positions include 58-60 (SNN), His178, and Lys209. Asp234 contacts Mg(2+).

It belongs to the HAD-like hydrolase superfamily. Homodimer. Mg(2+) serves as cofactor. Ubiquitous. highly expressed in brain (at protein level).

The protein resides in the cytoplasm. Its subcellular location is the cytosol. The protein localises to the cytoskeleton. It localises to the cell projection. It is found in the ruffle membrane. The protein resides in the lamellipodium membrane. Its subcellular location is the cell membrane. The catalysed reaction is pyridoxal 5'-phosphate + H2O = pyridoxal + phosphate. It carries out the reaction pyridoxine 5'-phosphate + H2O = pyridoxine + phosphate. The enzyme catalyses pyridoxamine + phosphate = pyridoxamine 5'-phosphate + H2O. It catalyses the reaction O-phospho-L-seryl-[protein] + H2O = L-seryl-[protein] + phosphate. Its activity is regulated as follows. Inhibited by beryllium trifluoride. Its function is as follows. Functions as a pyridoxal phosphate (PLP) phosphatase, which also catalyzes the dephosphorylation of pyridoxine 5'-phosphate (PNP) and pyridoxamine 5'-phosphate (PMP), with order of substrate preference PLP &gt; PNP &gt; PMP and therefore plays a role in vitamin B6 metabolism. Also functions as a protein serine phosphatase that specifically dephosphorylates 'Ser-3' in proteins of the actin-depolymerizing factor (ADF)/cofilin family like CFL1 and DSTN. Thereby, regulates cofilin-dependent actin cytoskeleton reorganization, being required for normal progress through mitosis and normal cytokinesis. Does not dephosphorylate phosphothreonines in LIMK1. Does not dephosphorylate peptides containing phosphotyrosine. The polypeptide is Chronophin (Mus musculus (Mouse)).